The chain runs to 270 residues: Acetylglutamate kinase (270 aa).

Residues 41-42 (GG), Arg-63, and Asn-166 contribute to the substrate site.

The protein belongs to the acetylglutamate kinase family. ArgB subfamily.

Its subcellular location is the cytoplasm. The catalysed reaction is N-acetyl-L-glutamate + ATP = N-acetyl-L-glutamyl 5-phosphate + ADP. It participates in amino-acid biosynthesis; L-arginine biosynthesis; N(2)-acetyl-L-ornithine from L-glutamate: step 2/4. Catalyzes the ATP-dependent phosphorylation of N-acetyl-L-glutamate. In Anaeromyxobacter dehalogenans (strain 2CP-C), this protein is Acetylglutamate kinase.